The primary structure comprises 482 residues: GTPase Obg (482 aa).

Positions Pro-2 to Val-159 constitute an Obg domain. The OBG-type G domain occupies Ala-160–Ala-341. GTP-binding positions include Gly-166–Ser-173, Phe-191–Ala-195, Asp-212–Gly-215, Asn-292–Asp-295, and Ser-322–Val-324. Ser-173 and Thr-193 together coordinate Mg(2+). An OCT domain is found at Pro-359–Pro-437. Residues Arg-450–Glu-482 are disordered. Residues Thr-452–Lys-468 show a composition bias toward basic and acidic residues.

Belongs to the TRAFAC class OBG-HflX-like GTPase superfamily. OBG GTPase family. In terms of assembly, monomer. It depends on Mg(2+) as a cofactor.

It is found in the cytoplasm. Its function is as follows. An essential GTPase which binds GTP, GDP and possibly (p)ppGpp with moderate affinity, with high nucleotide exchange rates and a fairly low GTP hydrolysis rate. Plays a role in control of the cell cycle, stress response, ribosome biogenesis and in those bacteria that undergo differentiation, in morphogenesis control. The polypeptide is GTPase Obg (Mycolicibacterium gilvum (strain PYR-GCK) (Mycobacterium gilvum (strain PYR-GCK))).